The chain runs to 206 residues: Large ribosomal subunit protein uL4 (206 aa).

The interval 46–77 (GTRAQKDREQVRHSTKKPFKQKGTGRARAGMT) is disordered. The segment covering 58–70 (HSTKKPFKQKGTG) has biased composition (basic residues).

Belongs to the universal ribosomal protein uL4 family. In terms of assembly, part of the 50S ribosomal subunit.

Functionally, one of the primary rRNA binding proteins, this protein initially binds near the 5'-end of the 23S rRNA. It is important during the early stages of 50S assembly. It makes multiple contacts with different domains of the 23S rRNA in the assembled 50S subunit and ribosome. Forms part of the polypeptide exit tunnel. The chain is Large ribosomal subunit protein uL4 from Polaromonas sp. (strain JS666 / ATCC BAA-500).